The following is a 1022-amino-acid chain: Antigenic heat-stable 120 kDa protein (1022 aa).

2 disordered regions span residues 1–41 (MSKD…QTTT) and 355–403 (GQSK…PQSQ). Positions 19–34 (EYTEEQKQTLEQEQKE) are enriched in basic and acidic residues. Composition is skewed to polar residues over residues 355 to 380 (GQSKEQPLITPQQTTSSSVEPPQYKQ) and 387 to 403 (PTNQPLQPETSQMPQSQ).

It localises to the cytoplasm. In Rickettsia conorii (strain ATCC VR-613 / Malish 7), this protein is Antigenic heat-stable 120 kDa protein (sca4).